Consider the following 267-residue polypeptide: UDP-glucose:undecaprenyl-phosphate glucose-1-phosphate transferase (267 aa).

Residues 83–103 (VAAALLTALFAPLLLLAALAI) traverse the membrane as a helical segment.

Belongs to the bacterial sugar transferase family.

The protein resides in the cell membrane. The enzyme catalyses di-trans,octa-cis-undecaprenyl phosphate + UDP-alpha-D-glucose = alpha-D-glucosyl di-trans,octa-cis-undecaprenyl diphosphate + UMP. Its function is as follows. Is likely the initiating enzyme for holdfast polysaccharide synthesis. Catalyzes the transfer of the glucose-1-phosphate moiety from UDP-Glc onto the carrier lipid undecaprenyl phosphate (C55-P), forming a phosphoanhydride bond yielding to glucosyl-pyrophosphoryl-undecaprenol (Glc-PP-C55). Also possesses a weak galactose-1-P transferase activity. This chain is UDP-glucose:undecaprenyl-phosphate glucose-1-phosphate transferase (pssY), found in Caulobacter vibrioides (strain ATCC 19089 / CIP 103742 / CB 15) (Caulobacter crescentus).